We begin with the raw amino-acid sequence, 104 residues long: Replication restart protein PriB (104 aa).

Residues 1 to 101 (MTNRLELSGI…LHAEQIELID (101 aa)) enclose the SSB domain.

The protein belongs to the PriB family. In terms of assembly, homodimer. Interacts with DnaT. Interacts with PriA. Component of the replication restart primosome. Primosome assembly occurs via a 'hand-off' mechanism. PriA binds to replication forks, subsequently PriB then DnaT bind; DnaT then displaces ssDNA to generate the helicase loading substrate.

Functionally, involved in the restart of stalled replication forks, which reloads the replicative helicase on sites far from the origin of replication; the PriA-PriB pathway is the major replication restart pathway. During primosome assembly it facilitates complex formation between PriA and DnaT on DNA; stabilizes PriA on DNA. Stimulates the DNA unwinding activity of PriA helicase. Binds single-stranded (ss)DNA at the primosome assembly site (PAS). One study finds it binds 15 nucleotide (nt) ssDNA. Another study finds the minimal ssDNA length for binding to PriB is 25 nt; prefers dT(30) over dA(30). Also binds 22 nt dsDNA. In Klebsiella pneumoniae subsp. pneumoniae (strain ATCC 700721 / MGH 78578), this protein is Replication restart protein PriB.